The primary structure comprises 82 residues: Phosphoribosylformylglycinamidine synthase subunit PurS (82 aa).

This sequence belongs to the PurS family. In terms of assembly, homodimer. Part of the FGAM synthase complex composed of 1 PurL, 1 PurQ and 2 PurS subunits.

It localises to the cytoplasm. The enzyme catalyses N(2)-formyl-N(1)-(5-phospho-beta-D-ribosyl)glycinamide + L-glutamine + ATP + H2O = 2-formamido-N(1)-(5-O-phospho-beta-D-ribosyl)acetamidine + L-glutamate + ADP + phosphate + H(+). It functions in the pathway purine metabolism; IMP biosynthesis via de novo pathway; 5-amino-1-(5-phospho-D-ribosyl)imidazole from N(2)-formyl-N(1)-(5-phospho-D-ribosyl)glycinamide: step 1/2. Part of the phosphoribosylformylglycinamidine synthase complex involved in the purines biosynthetic pathway. Catalyzes the ATP-dependent conversion of formylglycinamide ribonucleotide (FGAR) and glutamine to yield formylglycinamidine ribonucleotide (FGAM) and glutamate. The FGAM synthase complex is composed of three subunits. PurQ produces an ammonia molecule by converting glutamine to glutamate. PurL transfers the ammonia molecule to FGAR to form FGAM in an ATP-dependent manner. PurS interacts with PurQ and PurL and is thought to assist in the transfer of the ammonia molecule from PurQ to PurL. The chain is Phosphoribosylformylglycinamidine synthase subunit PurS from Thermotoga maritima (strain ATCC 43589 / DSM 3109 / JCM 10099 / NBRC 100826 / MSB8).